Consider the following 388-residue polypeptide: LL-diaminopimelate aminotransferase (388 aa).

Residues Tyr16 and Gly41 each contribute to the substrate site. Pyridoxal 5'-phosphate is bound by residues Tyr70, 104-105 (SK), Tyr129, Asn179, Tyr210, and 239-241 (SLS). Lys105, Tyr129, and Asn179 together coordinate substrate. An N6-(pyridoxal phosphate)lysine modification is found at Lys242. Pyridoxal 5'-phosphate is bound at residue Arg250. Residue Arg368 participates in substrate binding.

Belongs to the class-I pyridoxal-phosphate-dependent aminotransferase family. LL-diaminopimelate aminotransferase subfamily. As to quaternary structure, homodimer. Requires pyridoxal 5'-phosphate as cofactor.

It catalyses the reaction (2S,6S)-2,6-diaminopimelate + 2-oxoglutarate = (S)-2,3,4,5-tetrahydrodipicolinate + L-glutamate + H2O + H(+). It participates in amino-acid biosynthesis; L-lysine biosynthesis via DAP pathway; LL-2,6-diaminopimelate from (S)-tetrahydrodipicolinate (aminotransferase route): step 1/1. In terms of biological role, involved in the synthesis of meso-diaminopimelate (m-DAP or DL-DAP), required for both lysine and peptidoglycan biosynthesis. Catalyzes the direct conversion of tetrahydrodipicolinate to LL-diaminopimelate. This is LL-diaminopimelate aminotransferase from Maridesulfovibrio salexigens (strain ATCC 14822 / DSM 2638 / NCIMB 8403 / VKM B-1763) (Desulfovibrio salexigens).